Reading from the N-terminus, the 108-residue chain is Histone H4 (108 aa).

Positions 1–24 are disordered; the sequence is MTGRGKGGKVLSLGGKGGKGAKRH. A DNA-binding region spans residues 17-21; sequence GGKGA.

This sequence belongs to the histone H4 family. The nucleosome is a histone octamer containing two molecules each of H2A, H2B, H3 and H4 assembled in one H3-H4 heterotetramer and two H2A-H2B heterodimers. The octamer wraps approximately 147 bp of DNA.

It localises to the nucleus. It is found in the chromosome. Its function is as follows. Core component of nucleosome. Nucleosomes wrap and compact DNA into chromatin, limiting DNA accessibility to the cellular machineries which require DNA as a template. Histones thereby play a central role in transcription regulation, DNA repair, DNA replication and chromosomal stability. DNA accessibility is regulated via a complex set of post-translational modifications of histones, also called histone code, and nucleosome remodeling. The polypeptide is Histone H4 (Mastigamoeba balamuthi (Phreatamoeba balamuthi)).